The primary structure comprises 294 residues: uncharacterized protein (294 aa).

Residues Thr43 and Tyr104 each act as charge relay system in the active site. Tyr130 acts as the Proton donor in catalysis. Lys158 functions as the Schiff-base intermediate with substrate in the catalytic mechanism.

Belongs to the DapA family. Homotetramer.

The protein localises to the cytoplasm. This is an uncharacterized protein from Pyrococcus abyssi (strain GE5 / Orsay).